The sequence spans 92 residues: Small ribosomal subunit protein uS19 (92 aa).

It belongs to the universal ribosomal protein uS19 family.

Its function is as follows. Protein S19 forms a complex with S13 that binds strongly to the 16S ribosomal RNA. In Methylobacterium nodulans (strain LMG 21967 / CNCM I-2342 / ORS 2060), this protein is Small ribosomal subunit protein uS19.